A 501-amino-acid chain; its full sequence is Protein disulfide isomerase-like 1-1 (501 aa).

Positions 1 to 23 (MAMRGFTLFSILVLSLCASSIRS) are cleaved as a signal peptide. The Thioredoxin 1 domain occupies 24–141 (EETETKEFVL…IVTYLKKQSG (118 aa)). Residue N39 is glycosylated (N-linked (GlcNAc...) asparagine). Active-site nucleophile residues include C59 and C62. A disulfide bridge connects residues C59 and C62. N275 carries an N-linked (GlcNAc...) asparagine glycan. One can recognise a Thioredoxin 2 domain in the interval 354–482 (FKDGKIAPHK…FISFVDKNKD (129 aa)). Catalysis depends on nucleophile residues C404 and C407. The cysteines at positions 404 and 407 are disulfide-linked. The short motif at 498–501 (KDEL) is the Prevents secretion from ER element.

This sequence belongs to the protein disulfide isomerase family. As to quaternary structure, interacts with RD21A, At3g19390, At5g43060. In terms of tissue distribution, highly expressed in flowers, stems and immature seeds, and at lower levels in leaves and siliques (at protein level).

The protein localises to the endoplasmic reticulum lumen. It is found in the vacuole. It carries out the reaction Catalyzes the rearrangement of -S-S- bonds in proteins.. Protein disulfide isomerase that associates with RD21A protease for trafficking from the ER through the Golgi to lytic and protein storage vacuoles of endothelial cells in developing seeds. Regulates the timing of programmed cell death (PCD) of the endothelial cells by chaperoning and inhibiting cysteine proteases during their trafficking to vacuoles. The chain is Protein disulfide isomerase-like 1-1 (PDIL1-1) from Arabidopsis thaliana (Mouse-ear cress).